A 432-amino-acid polypeptide reads, in one-letter code: Alcohol acyltransferase 9 (432 aa).

Catalysis depends on proton acceptor residues His-156 and Asp-379.

It belongs to the plant acyltransferase family. As to expression, expressed in fruit.

The enzyme catalyses 2-(methylsulfanyl)acetyl-CoA + butan-1-ol = butyl 2-(methylsulfanyl)acetate + CoA. It catalyses the reaction ethanol + acetyl-CoA = ethyl acetate + CoA. It carries out the reaction butan-1-ol + acetyl-CoA = butyl acetate + CoA. The catalysed reaction is butan-1-ol + propanoyl-CoA = butyl propanoate + CoA. Functionally, involved in the biosynthesis of volatile esters which confer kiwifruit flavor. Alcohol acyl transferase that can use a wide range of alcohols as substrate to produce esters. Exhibits acetyl-CoA:alcohol O-acyltransferase activity. This chain is Alcohol acyltransferase 9, found in Actinidia eriantha (Velvet vine).